We begin with the raw amino-acid sequence, 447 residues long: Phosphoglucosamine mutase (447 aa).

Residue Ser105 is the Phosphoserine intermediate of the active site. Ser105, Asp244, Asp246, and Asp248 together coordinate Mg(2+). At Ser105 the chain carries Phosphoserine.

The protein belongs to the phosphohexose mutase family. Mg(2+) serves as cofactor. In terms of processing, activated by phosphorylation.

The catalysed reaction is alpha-D-glucosamine 1-phosphate = D-glucosamine 6-phosphate. In terms of biological role, catalyzes the conversion of glucosamine-6-phosphate to glucosamine-1-phosphate. In Polynucleobacter asymbioticus (strain DSM 18221 / CIP 109841 / QLW-P1DMWA-1) (Polynucleobacter necessarius subsp. asymbioticus), this protein is Phosphoglucosamine mutase.